We begin with the raw amino-acid sequence, 405 residues long: L-carnitine CoA-transferase (405 aa).

CoA is bound by residues K97 and R104. The Nucleophile role is filled by D169.

It belongs to the CoA-transferase III family. CaiB subfamily. As to quaternary structure, homodimer.

It localises to the cytoplasm. It carries out the reaction crotonobetainyl-CoA + (R)-carnitine = crotonobetaine + (R)-carnitinyl-CoA. It catalyses the reaction 4-(trimethylamino)butanoyl-CoA + (R)-carnitine = (R)-carnitinyl-CoA + 4-(trimethylamino)butanoate. It functions in the pathway amine and polyamine metabolism; carnitine metabolism. Catalyzes the reversible transfer of the CoA moiety from gamma-butyrobetainyl-CoA to L-carnitine to generate L-carnitinyl-CoA and gamma-butyrobetaine. Is also able to catalyze the reversible transfer of the CoA moiety from gamma-butyrobetainyl-CoA or L-carnitinyl-CoA to crotonobetaine to generate crotonobetainyl-CoA. This chain is L-carnitine CoA-transferase, found in Salmonella gallinarum (strain 287/91 / NCTC 13346).